A 421-amino-acid polypeptide reads, in one-letter code: Putative zinc finger protein R05D3.3 (421 aa).

2 C2H2-type zinc fingers span residues 207–228 (VLCV…IEAH) and 234–257 (YKCS…RTQH). The tract at residues 400-421 (GSSITDSNEPGPSEIKKELAEV) is disordered.

The protein resides in the nucleus. This is Putative zinc finger protein R05D3.3 from Caenorhabditis elegans.